A 394-amino-acid chain; its full sequence is Flavohemoprotein (394 aa).

Residues Met1–Glu136 enclose the Globin domain. His85 is a binding site for heme b. Residues Tyr95 and Glu135 each act as charge relay system in the active site. The reductase stretch occupies residues Gly147–Leu394. One can recognise an FAD-binding FR-type domain in the interval Arg150 to Asp255. FAD-binding positions include Tyr188 and Arg204–Ser207. An NADP(+)-binding site is contributed by Gly268–Pro273. Residue Cys387–Pro390 participates in FAD binding.

It belongs to the globin family. Two-domain flavohemoproteins subfamily. In the C-terminal section; belongs to the flavoprotein pyridine nucleotide cytochrome reductase family. It depends on heme b as a cofactor. FAD serves as cofactor.

The catalysed reaction is 2 nitric oxide + NADPH + 2 O2 = 2 nitrate + NADP(+) + H(+). It carries out the reaction 2 nitric oxide + NADH + 2 O2 = 2 nitrate + NAD(+) + H(+). Its function is as follows. Is involved in NO detoxification in an aerobic process, termed nitric oxide dioxygenase (NOD) reaction that utilizes O(2) and NAD(P)H to convert NO to nitrate, which protects the bacterium from various noxious nitrogen compounds. Therefore, plays a central role in the inducible response to nitrosative stress. The protein is Flavohemoprotein of Photobacterium profundum (strain SS9).